We begin with the raw amino-acid sequence, 489 residues long: Cobyric acid synthase (489 aa).

The 194-residue stretch at 251-444 (GLIIAVIRLP…LHGIFANDTF (194 aa)) folds into the GATase cobBQ-type domain. Cysteine 329 (nucleophile) is an active-site residue. Residue histidine 436 is part of the active site.

The protein belongs to the CobB/CobQ family. CobQ subfamily.

Its pathway is cofactor biosynthesis; adenosylcobalamin biosynthesis. Its function is as follows. Catalyzes amidations at positions B, D, E, and G on adenosylcobyrinic A,C-diamide. NH(2) groups are provided by glutamine, and one molecule of ATP is hydrogenolyzed for each amidation. This Chloroflexus aurantiacus (strain ATCC 29366 / DSM 635 / J-10-fl) protein is Cobyric acid synthase.